Reading from the N-terminus, the 336-residue chain is MTHLNKKQRLENNHNNTVNNHFEDLHDDLIISILRKLATSASSPSDFLTVLSTCKRLNRLGLHPLVLSKAGTQTLAVTAEKWSDSSHKFLKLCVNAGNIDASYSLGMIRFYCLQNPVSGASLMAKAAIKSHAPALYSLSVIQFNGSGGSKTDKNLRAGVALCARSAYLGHVDALRELGHCLQDGYGVPRDVSEGRRLLIQANARELACSLRSYLSLKSGDENETLTDLSVVPVQEIHPVNRFLKEWFSSGRVDLAEGLRMCSHGGCGRPETRAHEFRRCSVCGKVNYCSRGCQALDWRAKHKVECTPLDLWVAAAAEIGDDGEAVAVEIDDNHGER.

Positions 19–70 (NNHFEDLHDDLIISILRKLATSASSPSDFLTVLSTCKRLNRLGLHPLVLSKA) constitute an F-box domain. Zn(2+) is bound by residues His-263, Cys-266, Cys-279, Cys-282, Cys-288, Cys-292, His-301, and Cys-305. The MYND-type; atypical zinc finger occupies 263–305 (HGGCGRPETRAHEFRRCSVCGKVNYCSRGCQALDWRAKHKVEC).

This is F-box protein At5g50450 from Arabidopsis thaliana (Mouse-ear cress).